Consider the following 307-residue polypeptide: 4-hydroxythreonine-4-phosphate dehydrogenase (307 aa).

2 residues coordinate substrate: His121 and Thr122. Positions 150, 189, and 245 each coordinate a divalent metal cation. Substrate contacts are provided by Lys253, Asn262, and Arg271.

It belongs to the PdxA family. Homodimer. It depends on Zn(2+) as a cofactor. The cofactor is Mg(2+). Co(2+) is required as a cofactor.

It localises to the cytoplasm. The catalysed reaction is 4-(phosphooxy)-L-threonine + NAD(+) = 3-amino-2-oxopropyl phosphate + CO2 + NADH. Its pathway is cofactor biosynthesis; pyridoxine 5'-phosphate biosynthesis; pyridoxine 5'-phosphate from D-erythrose 4-phosphate: step 4/5. Catalyzes the NAD(P)-dependent oxidation of 4-(phosphooxy)-L-threonine (HTP) into 2-amino-3-oxo-4-(phosphooxy)butyric acid which spontaneously decarboxylates to form 3-amino-2-oxopropyl phosphate (AHAP). The sequence is that of 4-hydroxythreonine-4-phosphate dehydrogenase from Sulfurimonas denitrificans (strain ATCC 33889 / DSM 1251) (Thiomicrospira denitrificans (strain ATCC 33889 / DSM 1251)).